Here is a 482-residue protein sequence, read N- to C-terminus: Cardiolipin synthase (482 aa).

2 helical membrane-spanning segments follow: residues 4–24 (LAYLLVILLILNVFFAAVTVF) and 34–54 (WAWLLVLTFVPIFGFIIYLIF). 2 consecutive PLD phosphodiesterase domains span residues 217–244 (LNYRNHRKLAIIDGDVGYIGGFNIGDEY) and 395–422 (DNGFIHAKTLVVDGEIASVGTANMDFRS). Catalysis depends on residues histidine 222, lysine 224, aspartate 229, histidine 400, lysine 402, and aspartate 407.

The protein belongs to the phospholipase D family. Cardiolipin synthase subfamily.

The protein localises to the cell membrane. The catalysed reaction is 2 a 1,2-diacyl-sn-glycero-3-phospho-(1'-sn-glycerol) = a cardiolipin + glycerol. Its function is as follows. Catalyzes the reversible phosphatidyl group transfer from one phosphatidylglycerol molecule to another to form cardiolipin (CL) (diphosphatidylglycerol) and glycerol. The protein is Cardiolipin synthase (cls) of Listeria innocua serovar 6a (strain ATCC BAA-680 / CLIP 11262).